The primary structure comprises 120 residues: Putative membrane protein insertion efficiency factor (120 aa).

The interval 93-120 (GRSCQTDVDGANDDWNPASKRGERESFV) is disordered.

It belongs to the UPF0161 family.

The protein localises to the cell membrane. Could be involved in insertion of integral membrane proteins into the membrane. The sequence is that of Putative membrane protein insertion efficiency factor from Mycobacterium bovis (strain ATCC BAA-935 / AF2122/97).